The following is a 435-amino-acid chain: Glutamate-1-semialdehyde 2,1-aminomutase (435 aa).

Lys266 bears the N6-(pyridoxal phosphate)lysine mark.

It belongs to the class-III pyridoxal-phosphate-dependent aminotransferase family. HemL subfamily. In terms of assembly, homodimer. It depends on pyridoxal 5'-phosphate as a cofactor.

It localises to the cytoplasm. The catalysed reaction is (S)-4-amino-5-oxopentanoate = 5-aminolevulinate. It participates in porphyrin-containing compound metabolism; protoporphyrin-IX biosynthesis; 5-aminolevulinate from L-glutamyl-tRNA(Glu): step 2/2. The polypeptide is Glutamate-1-semialdehyde 2,1-aminomutase (Nitrosomonas europaea (strain ATCC 19718 / CIP 103999 / KCTC 2705 / NBRC 14298)).